Here is a 123-residue protein sequence, read N- to C-terminus: Large ribosomal subunit protein bL12 (123 aa).

Belongs to the bacterial ribosomal protein bL12 family. In terms of assembly, homodimer. Part of the ribosomal stalk of the 50S ribosomal subunit. Forms a multimeric L10(L12)X complex, where L10 forms an elongated spine to which 2 to 4 L12 dimers bind in a sequential fashion. Binds GTP-bound translation factors.

Forms part of the ribosomal stalk which helps the ribosome interact with GTP-bound translation factors. Is thus essential for accurate translation. In Neisseria gonorrhoeae (strain NCCP11945), this protein is Large ribosomal subunit protein bL12.